The chain runs to 418 residues: MEPYSCDTFVALPPATVGNRVIFGKNSDRLFDEVQEVIYCPAAVHNDLEKRLKCTYIEVDQVPETYAVVLSRPAWLWGAEMGANEHGVCIGNEAVWGREDISKEEALLGMDLVRLGLERADTAEKALDVIVDLLEKYGQGGNCAEGKEFSYYNSFLIADRNEAWILETSGKYWAAERVQGVRNISNQLSITTKIDREHPDMRNYAKQRGWWDGKEEFDFTAAYSYIDTAAMMTSPSRYCQGYKLLDKHRGNITFETMMEILRDRPSGINMKGEFLTTASMVSVLPQDPSLPCIHLFTATPHPERSVFKPFIFVPHISPLLDTKSPTFEPERPVAKKPYVKPDRRHPLYQKHQEALEMISNSKEKGKTILDKMRKLEKAVSEEIESILQSGHLDEEKTVNLFPQYVKDEIKIYQSNISS.

A propeptide spanning residues 1 to 5 (MEPYS) is cleaved from the precursor. Residue cysteine 6 is part of the active site. Position 6 is a glyoxylic acid (Cys); alternate (cysteine 6). Cysteine 6 bears the Pyruvic acid (Cys); alternate mark.

Belongs to the peptidase C69 family. Secernin subfamily.

In terms of biological role, plays a role in thermal nociception. The chain is Secernin-3 (Scrn3) from Mus musculus (Mouse).